Reading from the N-terminus, the 131-residue chain is Cytochrome c-552 (131 aa).

Residues Cys11, Cys14, His15, and Met69 each contribute to the heme c site.

Post-translationally, binds 1 heme c group covalently per subunit.

Its function is as follows. This monoheme basic protein appears to function as an electron donor to cytochrome oxidase in T.thermophilus. In Thermus thermophilus, this protein is Cytochrome c-552 (cycA).